The primary structure comprises 241 residues: MATLTAKNLAKAYKGRRVVEDVSLTVNSGEIVGLLGPNGAGKTTTFYMVVGIVPRDAGNIIIDDDDISLLPLHARARRGIGYLPQEASIFRRLSVYDNLMAVLQIRDDLSAEQREDRANELMEEFHIEHLRDSMGQSLSGGERRRVEIARALAANPKFILLDEPFAGVDPISVIDIKRIIEHLRDSGLGVLITDHNVRETLAVCERAYIVSQGHLIAHGTPTEILQDEHVKRVYLGEDFRL.

One can recognise an ABC transporter domain in the interval 4–237 (LTAKNLAKAY…EHVKRVYLGE (234 aa)). 36-43 (GPNGAGKT) provides a ligand contact to ATP.

Belongs to the ABC transporter superfamily. Outer membrane lipopolysaccharide export (TC 1.B.42) family. As to quaternary structure, component of the lipopolysaccharide transport and assembly complex. The LptBFG transporter is composed of two ATP-binding proteins (LptB) and two transmembrane proteins (LptF and LptG).

The protein resides in the cytoplasm. The protein localises to the cell inner membrane. Functionally, part of the ABC transporter complex LptBFG involved in the translocation of lipopolysaccharide (LPS) from the inner membrane to the outer membrane. Probably responsible for energy coupling to the transport system. The protein is Lipopolysaccharide export system ATP-binding protein LptB (lptB) of Escherichia coli O157:H7.